Here is a 245-residue protein sequence, read N- to C-terminus: uncharacterized protein (245 aa).

The N-terminal stretch at 1–27 (MKLKKRVSMFLVALTMCGGLFVTPAKA) is a signal peptide.

This is an uncharacterized protein from Bacillus subtilis (strain 168).